A 321-amino-acid chain; its full sequence is Protein ZAR1-like (321 aa).

Residues 110 to 214 (RTLSSCSPWD…GDAASEPLRR (105 aa)) form a disordered region. The span at 145–154 (LRRDGDEAES) shows a compositional bias: basic and acidic residues. Residues 222–307 (PKYGYFHCKD…QELCGRCKDK (86 aa)) form a 3CxxC-type zinc finger.

The protein belongs to the ZAR1 family. In terms of assembly, interacts with YBX2.

The protein resides in the cytoplasm. It is found in the cytoplasmic ribonucleoprotein granule. MRNA-binding protein required for maternal mRNA storage, translation and degradation during oocyte maturation. Probably promotes formation of some phase-separated membraneless compartment that stores maternal mRNAs in oocytes: acts by undergoing liquid-liquid phase separation upon binding to maternal mRNAs. Binds to the 3'-UTR of maternal mRNAs, inhibiting their translation. The sequence is that of Protein ZAR1-like from Homo sapiens (Human).